Consider the following 343-residue polypeptide: Nuclear distribution protein nudE-like 1 (343 aa).

Residues 25–190 (KYKQSFQEAR…LAVRERQQEV (166 aa)) adopt a coiled-coil conformation. 2 disordered regions span residues 184–204 (RERQQEVTRKSAPSSPTLDCE) and 322–343 (QGTPGLGASRPSSAPGMLPLSV).

Belongs to the nudE family. Phosphorylated in mitosis.

It localises to the cytoplasm. Its subcellular location is the cytoskeleton. The protein localises to the microtubule organizing center. It is found in the centrosome. The protein resides in the spindle. Functionally, required for organization of the cellular microtubule array and microtubule anchoring at the centrosome. Positively regulates the activity of the minus-end directed microtubule motor protein dynein. May enhance dynein-mediated microtubule sliding by targeting dynein to the microtubule plus end. Positively regulates lysosome peripheral distribution and ruffled border formation in osteoclasts. The polypeptide is Nuclear distribution protein nudE-like 1 (NDEL1) (Gallus gallus (Chicken)).